The chain runs to 341 residues: Glycerol-3-phosphate dehydrogenase [NAD(P)+] (341 aa).

Residues Ser11, Trp12, Arg33, and Lys106 each contribute to the NADPH site. 3 residues coordinate sn-glycerol 3-phosphate: Lys106, Gly137, and Ser139. Ala141 provides a ligand contact to NADPH. Residues Lys192, Asp245, Ser255, Arg256, and Asn257 each contribute to the sn-glycerol 3-phosphate site. The active-site Proton acceptor is Lys192. Residue Arg256 coordinates NADPH. The NADPH site is built by Val280 and Glu282.

This sequence belongs to the NAD-dependent glycerol-3-phosphate dehydrogenase family.

The protein localises to the cytoplasm. The enzyme catalyses sn-glycerol 3-phosphate + NAD(+) = dihydroxyacetone phosphate + NADH + H(+). It carries out the reaction sn-glycerol 3-phosphate + NADP(+) = dihydroxyacetone phosphate + NADPH + H(+). It functions in the pathway membrane lipid metabolism; glycerophospholipid metabolism. Functionally, catalyzes the reduction of the glycolytic intermediate dihydroxyacetone phosphate (DHAP) to sn-glycerol 3-phosphate (G3P), the key precursor for phospholipid synthesis. This is Glycerol-3-phosphate dehydrogenase [NAD(P)+] from Bacillus cytotoxicus (strain DSM 22905 / CIP 110041 / 391-98 / NVH 391-98).